The primary structure comprises 585 residues: A-type ATP synthase subunit A (585 aa).

231–238 (GPFGSGKT) lines the ATP pocket.

This sequence belongs to the ATPase alpha/beta chains family. Has multiple subunits with at least A(3), B(3), C, D, E, F, H, I and proteolipid K(x).

It is found in the cell membrane. It catalyses the reaction ATP + H2O + 4 H(+)(in) = ADP + phosphate + 5 H(+)(out). Functionally, component of the A-type ATP synthase that produces ATP from ADP in the presence of a proton gradient across the membrane. The A chain is the catalytic subunit. The chain is A-type ATP synthase subunit A from Thermococcus onnurineus (strain NA1).